The following is a 390-amino-acid chain: Queuine tRNA-ribosyltransferase (390 aa).

The Proton acceptor role is filled by Asp92. Substrate is bound by residues 92–96, Asp146, Gln195, and Gly222; that span reads DSGGF. An RNA binding region spans residues 253 to 259; the sequence is GVGTPED. The Nucleophile role is filled by Asp272. Residues 277–281 are RNA binding; important for wobble base 34 recognition; the sequence is TRNAR. Zn(2+)-binding residues include Cys310, Cys312, Cys315, and His354.

Belongs to the queuine tRNA-ribosyltransferase family. As to quaternary structure, homodimer. Within each dimer, one monomer is responsible for RNA recognition and catalysis, while the other monomer binds to the replacement base PreQ1. It depends on Zn(2+) as a cofactor.

The catalysed reaction is 7-aminomethyl-7-carbaguanine + guanosine(34) in tRNA = 7-aminomethyl-7-carbaguanosine(34) in tRNA + guanine. Its pathway is tRNA modification; tRNA-queuosine biosynthesis. Its function is as follows. Catalyzes the base-exchange of a guanine (G) residue with the queuine precursor 7-aminomethyl-7-deazaguanine (PreQ1) at position 34 (anticodon wobble position) in tRNAs with GU(N) anticodons (tRNA-Asp, -Asn, -His and -Tyr). Catalysis occurs through a double-displacement mechanism. The nucleophile active site attacks the C1' of nucleotide 34 to detach the guanine base from the RNA, forming a covalent enzyme-RNA intermediate. The proton acceptor active site deprotonates the incoming PreQ1, allowing a nucleophilic attack on the C1' of the ribose to form the product. After dissociation, two additional enzymatic reactions on the tRNA convert PreQ1 to queuine (Q), resulting in the hypermodified nucleoside queuosine (7-(((4,5-cis-dihydroxy-2-cyclopenten-1-yl)amino)methyl)-7-deazaguanosine). The polypeptide is Queuine tRNA-ribosyltransferase (Delftia acidovorans (strain DSM 14801 / SPH-1)).